A 78-amino-acid polypeptide reads, in one-letter code: MLCQQMIRTTAKRSSNIMTRPIIMKRSVHFKDGVYENIPFKVKGRKTPYALSHFGFFAIGFAVPFVACYVQLKKSGAF.

A mitochondrion-targeting transit peptide spans 1–27 (MLCQQMIRTTAKRSSNIMTRPIIMKRS). At 28-51 (VHFKDGVYENIPFKVKGRKTPYAL) the chain is on the mitochondrial matrix side. The chain crosses the membrane as a helical span at residues 52 to 73 (SHFGFFAIGFAVPFVACYVQLK). Lys74 is a topological domain (mitochondrial intermembrane). The propeptide occupies 75–78 (SGAF).

Belongs to the cytochrome c oxidase VIIc family. In terms of assembly, component of the cytochrome c oxidase (complex IV, CIV), a multisubunit enzyme composed of 12 subunits. The complex is composed of a catalytic core of 3 subunits COX1, COX2 and COX3, encoded in the mitochondrial DNA, and 9 supernumerary subunits COX4, COX5A (or COX5B), COX6, COX7, COX8, COX9, COX12, COX13 and COX26, which are encoded in the nuclear genome. The complex exists as a monomer or a dimer and forms supercomplexes (SCs) in the inner mitochondrial membrane with a dimer of ubiquinol-cytochrome c oxidoreductase (cytochrome b-c1 complex, complex III, CIII), resulting in 2 different assemblies (supercomplexes III(2)IV and III(2)IV(2)).

It is found in the mitochondrion inner membrane. The protein operates within energy metabolism; oxidative phosphorylation. In terms of biological role, component of the cytochrome c oxidase, the last enzyme in the mitochondrial electron transport chain which drives oxidative phosphorylation. The respiratory chain contains 3 multisubunit complexes succinate dehydrogenase (complex II, CII), ubiquinol-cytochrome c oxidoreductase (cytochrome b-c1 complex, complex III, CIII) and cytochrome c oxidase (complex IV, CIV), that cooperate to transfer electrons derived from NADH and succinate to molecular oxygen, creating an electrochemical gradient over the inner membrane that drives transmembrane transport and the ATP synthase. Cytochrome c oxidase is the component of the respiratory chain that catalyzes the reduction of oxygen to water. Electrons originating from reduced cytochrome c in the intermembrane space (IMS) are transferred via the dinuclear copper A center (CU(A)) of COX2 and heme A of COX1 to the active site in COX1, a binuclear center (BNC) formed by heme A3 and copper B (CU(B)). The BNC reduces molecular oxygen to 2 water molecules using 4 electrons from cytochrome c in the IMS and 4 protons from the mitochondrial matrix. This chain is Cytochrome c oxidase subunit 8, mitochondrial (COX8), found in Saccharomyces cerevisiae (strain ATCC 204508 / S288c) (Baker's yeast).